The sequence spans 219 residues: Transmembrane protein 17A (219 aa).

N-linked (GlcNAc...) asparagine glycosylation is found at Asn-18 and Asn-27. 4 helical membrane-spanning segments follow: residues 56-76 (MMLY…LLML), 83-103 (LPVY…IFEV), 121-141 (LAGF…FFIT), and 153-173 (AVHS…FLAL).

It belongs to the TMEM17 family. In terms of assembly, part of the tectonic-like complex (also named B9 complex).

Its subcellular location is the cell projection. The protein resides in the cilium membrane. In terms of biological role, transmembrane component of the tectonic-like complex, a complex localized at the transition zone of primary cilia and acting as a barrier that prevents diffusion of transmembrane proteins between the cilia and plasma membranes. Required for ciliogenesis and sonic hedgehog/SHH signaling. This Danio rerio (Zebrafish) protein is Transmembrane protein 17A (tmem17a).